The following is a 514-amino-acid chain: Histidine ammonia-lyase (514 aa).

Positions 143 to 145 (ASG) form a cross-link, 5-imidazolinone (Ala-Gly). Position 144 is a 2,3-didehydroalanine (Ser) (serine 144).

It belongs to the PAL/histidase family. In terms of processing, contains an active site 4-methylidene-imidazol-5-one (MIO), which is formed autocatalytically by cyclization and dehydration of residues Ala-Ser-Gly.

Its subcellular location is the cytoplasm. It catalyses the reaction L-histidine = trans-urocanate + NH4(+). Its pathway is amino-acid degradation; L-histidine degradation into L-glutamate; N-formimidoyl-L-glutamate from L-histidine: step 1/3. The polypeptide is Histidine ammonia-lyase (Photorhabdus laumondii subsp. laumondii (strain DSM 15139 / CIP 105565 / TT01) (Photorhabdus luminescens subsp. laumondii)).